The sequence spans 167 residues: Protein archease (167 aa).

A2 is subject to N-acetylalanine. 3 residues coordinate Ca(2+): D39, D166, and I167.

The protein belongs to the archease family. As to quaternary structure, component of the tRNA-splicing ligase complex.

Functionally, component of the tRNA-splicing ligase complex required to facilitate the enzymatic turnover of catalytic subunit RTCB. Together with DDX1, acts by facilitating the guanylylation of RTCB, a key intermediate step in tRNA ligation. The sequence is that of Protein archease (ZBTB8OS) from Homo sapiens (Human).